The chain runs to 438 residues: Putative hydroxypyruvate reductase (438 aa).

It carries out the reaction (R)-glycerate + NAD(+) = 3-hydroxypyruvate + NADH + H(+). It catalyses the reaction (R)-glycerate + NADP(+) = 3-hydroxypyruvate + NADPH + H(+). It functions in the pathway carbohydrate acid metabolism; tartrate degradation; 3-hydroxypyruvate from D-glycerate: step 1/1. Degrades an unidentified toxic product from the first step of tartrate degradation. This Agrobacterium vitis (Rhizobium vitis) protein is Putative hydroxypyruvate reductase (ttuD).